The following is a 302-amino-acid chain: Nitrophorin Cim l NP (302 aa).

An N-terminal signal peptide occupies residues 1–20; it reads MKLLLSAGAALAFVLGLCAA. Cys-80 contributes to the heme binding site.

Heme b serves as cofactor. The N-terminus is blocked. As to expression, expressed in salivary glands.

It is found in the secreted. Functionally, heme-based protein that delivers nitric oxide gas (NO) to the victim while feeding, resulting in vasodilation. In place of heme, the heme-binding cysteine can also reversibly bind NO when it is present in high concentrations. The protein is Nitrophorin Cim l NP of Cimex lectularius (Bed bug).